Reading from the N-terminus, the 835-residue chain is MRVPYSWLCEVVTVGAPDWDVSASDLKQTLVRIGHEIEEMITVGPVDGPLTVGRVTDIEELTGFKKPIRACVVDVGDGQQHEIICGATNFVVGDLVVVAFPGTTLPDGFAIAACETYGRHSAGMICSAAELRLSTDHSGILVLPPGTALPGADGADVLGLDDVVFRLAITPDRGYCMSVRGLAREIACAYDLAFVDPASDQAVPPLPVGGQAWPVTVQPETGVRRCALRPVTGIDFAAVSPWWLQRRLLLSGIRAISPAVDVTNYVMLELGHPLHAHDRNRITGGFTVRFARPGETIVTIDGIERQLDPVDVLIVDNVTTAAIGGVMGAASTEVRSDSTDVLLEAAVWDPARVSHTQRRLHLPSEAARRYERAVDPAISVAALDRCAMLLADIAGGTVSETLTDWRGSPPRADWSLPPIRIAVDLPDRIAGVVYNQGATTKRLTQIGAVVVDTVSSEGHTLTVTPPSWRPDLLQPSDLVEEVLRLEGLEVIRSVRPLAPAGRGLTAVQKRYRAIGKVLAQSGYVEILPTPFLPADVFDLWGLPADDPRRTTTRVLNPLESNRPQLATTLLPALLEALVSNVSRGIIDVALFAIAQVVEPTEWTGGIGSIPVDRRLTDAEIALLDASLPRQPQHVAAVLAGLREPRGPWGPGRLAEASDAFEAVRIIARVSGVDVFFRAVQYLPWHPGRCAEVFVGETPIGHAGQLHPAVIERAGLPKGICAIELDLAAMPIVEGLPAPQVSPFPAVLQDVSLVVSTQVPAQEVQDAIRDGAGELLEDIQLFDVFTGSQIGEDCKSLTFALRFRAPDRTLTEDDASAARDAAVRHAAERVGATLRT.

Residues 44 to 158 enclose the tRNA-binding domain; the sequence is GPVDGPLTVG…LPGADGADVL (115 aa). Residues 414–493 enclose the B5 domain; sequence WSLPPIRIAV…RLEGLEVIRS (80 aa). 4 residues coordinate Mg(2+): aspartate 471, aspartate 477, glutamate 480, and glutamate 481. The 94-residue stretch at 741-834 folds into the FDX-ACB domain; that stretch reads SPFPAVLQDV…AAERVGATLR (94 aa).

Belongs to the phenylalanyl-tRNA synthetase beta subunit family. Type 1 subfamily. In terms of assembly, tetramer of two alpha and two beta subunits. Mg(2+) is required as a cofactor.

The protein localises to the cytoplasm. It carries out the reaction tRNA(Phe) + L-phenylalanine + ATP = L-phenylalanyl-tRNA(Phe) + AMP + diphosphate + H(+). This Mycobacterium leprae (strain TN) protein is Phenylalanine--tRNA ligase beta subunit.